Consider the following 76-residue polypeptide: Kappa-actitoxin-Avd4g (76 aa).

An N-terminal signal peptide occupies residues 1–19; sequence MNKALFLCLVVLCAAVVFA. Residues 20-31 constitute a propeptide that is removed on maturation; it reads AEDLQKAKHAPF. 3 disulfides stabilise this stretch: cysteine 37–cysteine 72, cysteine 39–cysteine 65, and cysteine 55–cysteine 73.

Belongs to the sea anemone type 3 (BDS) potassium channel toxin family. In terms of tissue distribution, moderately expressed in the ectodermal tissue from the distal and proximal tentacles, body wall, and oral disk.

It localises to the secreted. The protein localises to the nematocyst. Its function is as follows. Blocks Kv3 voltage-gated potassium channels. Reduces blood pressure. The sequence is that of Kappa-actitoxin-Avd4g from Anemonia viridis (Snakelocks anemone).